We begin with the raw amino-acid sequence, 301 residues long: Probable alpha-L-glutamate ligase (301 aa).

The ATP-grasp domain occupies L104 to E287. ATP is bound by residues K141, E178–Y179, D187, and R211–N213. 3 residues coordinate Mg(2+): D248, E260, and N262. Residues D248, E260, and N262 each contribute to the Mn(2+) site.

The protein belongs to the RimK family. The cofactor is Mg(2+). It depends on Mn(2+) as a cofactor.

This Pseudoalteromonas translucida (strain TAC 125) protein is Probable alpha-L-glutamate ligase.